Reading from the N-terminus, the 479-residue chain is Anaerobic nitric oxide reductase flavorubredoxin (479 aa).

Residues 30–210 (LRGSSYNSYL…PFSRLVTPKI (181 aa)) form a zinc metallo-hydrolase region. Residues histidine 79, glutamate 81, aspartate 83, histidine 147, aspartate 166, and histidine 227 each coordinate Fe cation. The 140-residue stretch at 254–393 (ITIVYDTMSN…LCREHGREIA (140 aa)) folds into the Flavodoxin-like domain. FMN contacts are provided by residues 260-264 (TMSNN) and 342-369 (AFGS…EMSL). The 52-residue stretch at 423-474 (GPRMQCSVCQWIYDPAKGEPMQDVAPGTPWSEVPDNFLCPECSLGKDVFDEL) folds into the Rubredoxin-like domain. Residues cysteine 428, cysteine 431, cysteine 461, and cysteine 464 each contribute to the Fe cation site.

This sequence in the N-terminal section; belongs to the zinc metallo-hydrolase group 3 family. In terms of assembly, homotetramer. The cofactor is Fe cation. FMN is required as a cofactor.

The protein resides in the cytoplasm. Its pathway is nitrogen metabolism; nitric oxide reduction. Its function is as follows. Anaerobic nitric oxide reductase; uses NADH to detoxify nitric oxide (NO), protecting several 4Fe-4S NO-sensitive enzymes. Has at least 2 reductase partners, only one of which (NorW, flavorubredoxin reductase) has been identified. NO probably binds to the di-iron center; electrons enter from the NorW at rubredoxin and are transferred sequentially to the FMN center and the di-iron center. Also able to function as an aerobic oxygen reductase. The protein is Anaerobic nitric oxide reductase flavorubredoxin of Escherichia coli (strain UTI89 / UPEC).